Reading from the N-terminus, the 498-residue chain is tRNA-guanine(15) transglycosylase (498 aa).

The active-site Nucleophile is Asp85. Asp120 contributes to the substrate binding site. Residues Cys275, Cys277, and Cys280 each coordinate Zn(2+).

This sequence belongs to the archaeosine tRNA-ribosyltransferase family. The cofactor is Zn(2+).

It carries out the reaction guanosine(15) in tRNA + 7-cyano-7-deazaguanine = 7-cyano-7-carbaguanosine(15) in tRNA + guanine. Its pathway is tRNA modification; archaeosine-tRNA biosynthesis. Exchanges the guanine residue with 7-cyano-7-deazaguanine (preQ0) at position 15 in the dihydrouridine loop (D-loop) of archaeal tRNAs. The polypeptide is tRNA-guanine(15) transglycosylase (Sulfolobus acidocaldarius (strain ATCC 33909 / DSM 639 / JCM 8929 / NBRC 15157 / NCIMB 11770)).